Here is a 33-residue protein sequence, read N- to C-terminus: Glutaminase-asparaginase (33 aa).

Residues 1 to 33 (NVVVLATGGTIAGAGTNAFASQXGPLGMVVEGK) enclose the Asparaginase/glutaminase domain. The active-site Acyl-ester intermediate is the Thr10.

It belongs to the asparaginase 1 family. As to quaternary structure, homotetramer.

Its subcellular location is the periplasm. The catalysed reaction is L-glutamine + H2O = L-glutamate + NH4(+). The enzyme catalyses L-asparagine + H2O = L-aspartate + NH4(+). In Delftia acidovorans (Pseudomonas acidovorans), this protein is Glutaminase-asparaginase (ansB).